A 108-amino-acid chain; its full sequence is Large ribosomal subunit protein eL30 (108 aa).

The protein belongs to the eukaryotic ribosomal protein eL30 family.

The chain is Large ribosomal subunit protein eL30 (rpl30e) from Saccharolobus solfataricus (strain ATCC 35092 / DSM 1617 / JCM 11322 / P2) (Sulfolobus solfataricus).